A 387-amino-acid polypeptide reads, in one-letter code: 3-ketoacyl-CoA thiolase (387 aa).

The active-site Acyl-thioester intermediate is Cys-91. Catalysis depends on proton acceptor residues His-343 and Cys-373.

It belongs to the thiolase-like superfamily. Thiolase family. Heterotetramer of two alpha chains (FadB) and two beta chains (FadA).

It localises to the cytoplasm. The enzyme catalyses an acyl-CoA + acetyl-CoA = a 3-oxoacyl-CoA + CoA. The protein operates within lipid metabolism; fatty acid beta-oxidation. Functionally, catalyzes the final step of fatty acid oxidation in which acetyl-CoA is released and the CoA ester of a fatty acid two carbons shorter is formed. This chain is 3-ketoacyl-CoA thiolase, found in Shewanella sp. (strain MR-4).